The following is a 417-amino-acid chain: Histidine biosynthesis bifunctional protein his7 (417 aa).

Residues 225-299 (GLVYSSKESV…HLDTLHCFGQ (75 aa)) are phosphoribosyl-AMP cyclohydrolase. The phosphoribosyl-ATP pyrophosphohydrolase stretch occupies residues 303–387 (LCQLEKTLID…ISRHLDLKHR (85 aa)).

It localises to the cytoplasm. The catalysed reaction is 1-(5-phospho-beta-D-ribosyl)-5'-AMP + H2O = 1-(5-phospho-beta-D-ribosyl)-5-[(5-phospho-beta-D-ribosylamino)methylideneamino]imidazole-4-carboxamide. It catalyses the reaction 1-(5-phospho-beta-D-ribosyl)-ATP + H2O = 1-(5-phospho-beta-D-ribosyl)-5'-AMP + diphosphate + H(+). Its pathway is amino-acid biosynthesis; L-histidine biosynthesis; L-histidine from 5-phospho-alpha-D-ribose 1-diphosphate: step 2/9. It functions in the pathway amino-acid biosynthesis; L-histidine biosynthesis; L-histidine from 5-phospho-alpha-D-ribose 1-diphosphate: step 3/9. This is Histidine biosynthesis bifunctional protein his7 from Schizosaccharomyces pombe (strain 972 / ATCC 24843) (Fission yeast).